Reading from the N-terminus, the 385-residue chain is GDP-mannose-dependent alpha-(1-6)-phosphatidylinositol monomannoside mannosyltransferase (385 aa).

Residues R205, K210, V262, and E299 each coordinate GDP-alpha-D-mannose.

It belongs to the glycosyltransferase group 1 family. Glycosyltransferase 4 subfamily.

The catalysed reaction is a 1,2-diacyl-sn-glycero-3-phospho-[alpha-D-mannopyranosyl-(1&lt;-&gt;6)-D-myo-inositol] + GDP-alpha-D-mannose = a 2,6-O-bis(alpha-D-mannopyranosyl)-1-phosphatidyl-1D-myo-inositol + GDP + H(+). It carries out the reaction a 1,2-diacyl-sn-glycero-3-phospho-[alpha-D-6-acyl-mannopyranosyl-(1&lt;-&gt;6)-D-myo-inositol] + GDP-alpha-D-mannose = a 2-O-(alpha-D-mannosyl)-6-O-(6-O-acyl-alpha-D-mannosyl)-1-phosphatidyl-1D-myo-inositol + GDP + H(+). It participates in phospholipid metabolism; phosphatidylinositol metabolism. Its function is as follows. Involved in the biosynthesis of phosphatidyl-myo-inositol mannosides (PIM) which are early precursors in the biosynthesis of lipomannans (LM) and lipoarabinomannans (LAM). Catalyzes the addition of a mannosyl residue from GDP-D-mannose (GDP-Man) to the position 6 of a phosphatidyl-myo-inositol bearing an alpha-1,2-linked mannose residue (PIM1) to generate phosphatidyl-myo-inositol bearing alpha-1,2- and alpha-1,6-linked mannose residues (Ac1PIM2). PimB also catalyzes the addition of a mannosyl residue from GDP-Man to the position 6 of phosphatidyl-myo-inositol bearing an acylated alpha-1,2-linked mannose residue (Ac1PIM1) to generate monoacylated phosphatidyl-myo-inositol bearing alpha-1,2- and alpha-1,6-linked mannose residues (Ac1PIM2). The addition of the second mannosyl residue by PimB preferentially occurs before the acylation of the mannosyl residue transferred by PimA. Also able to transfer a mannosyl residue from GDP-Man to the position 6 of a phosphatidyl-myo-inositol (PI), but this reaction is very slow. The polypeptide is GDP-mannose-dependent alpha-(1-6)-phosphatidylinositol monomannoside mannosyltransferase (Mycobacterium tuberculosis (strain CDC 1551 / Oshkosh)).